The sequence spans 712 residues: Polyribonucleotide nucleotidyltransferase (712 aa).

Mg(2+)-binding residues include Asp487 and Asp493. The KH domain occupies 554 to 613; that stretch reads PRIEVMNIPVDKIREVIGSGGKVIREIVEKTGAKINIEDDGTVKIASSSGKEIEAARKWI. The 69-residue stretch at 623-691 folds into the S1 motif domain; it reads GQVYEGTVVK…ERGKVRLSMK (69 aa).

Belongs to the polyribonucleotide nucleotidyltransferase family. The cofactor is Mg(2+).

It is found in the cytoplasm. The catalysed reaction is RNA(n+1) + phosphate = RNA(n) + a ribonucleoside 5'-diphosphate. Functionally, involved in mRNA degradation. Catalyzes the phosphorolysis of single-stranded polyribonucleotides processively in the 3'- to 5'-direction. The protein is Polyribonucleotide nucleotidyltransferase of Rhizobium johnstonii (strain DSM 114642 / LMG 32736 / 3841) (Rhizobium leguminosarum bv. viciae).